We begin with the raw amino-acid sequence, 258 residues long: uncharacterized protein (258 aa).

The first 20 residues, 1-20 (MKCFQKLYIFILILIVLMAG), serve as a signal peptide directing secretion. Cysteine 21 is lipidated: N-palmitoyl cysteine. Residue cysteine 21 is the site of S-diacylglycerol cysteine attachment.

The protein belongs to the staphylococcal tandem lipoprotein family.

Its subcellular location is the cell membrane. This is an uncharacterized protein from Staphylococcus aureus (strain COL).